Here is a 316-residue protein sequence, read N- to C-terminus: 4-hydroxy-3-methylbut-2-enyl diphosphate reductase (316 aa).

Position 12 (cysteine 12) interacts with [4Fe-4S] cluster. 2 residues coordinate (2E)-4-hydroxy-3-methylbut-2-enyl diphosphate: histidine 41 and histidine 74. Dimethylallyl diphosphate contacts are provided by histidine 41 and histidine 74. Isopentenyl diphosphate is bound by residues histidine 41 and histidine 74. Cysteine 96 is a binding site for [4Fe-4S] cluster. Histidine 124 lines the (2E)-4-hydroxy-3-methylbut-2-enyl diphosphate pocket. Residue histidine 124 coordinates dimethylallyl diphosphate. Histidine 124 contributes to the isopentenyl diphosphate binding site. The active-site Proton donor is glutamate 126. Position 169 (threonine 169) interacts with (2E)-4-hydroxy-3-methylbut-2-enyl diphosphate. Position 199 (cysteine 199) interacts with [4Fe-4S] cluster. The (2E)-4-hydroxy-3-methylbut-2-enyl diphosphate site is built by serine 227, serine 228, asparagine 229, and serine 271. Dimethylallyl diphosphate contacts are provided by serine 227, serine 228, asparagine 229, and serine 271. Isopentenyl diphosphate contacts are provided by serine 227, serine 228, asparagine 229, and serine 271.

This sequence belongs to the IspH family. The cofactor is [4Fe-4S] cluster.

It carries out the reaction isopentenyl diphosphate + 2 oxidized [2Fe-2S]-[ferredoxin] + H2O = (2E)-4-hydroxy-3-methylbut-2-enyl diphosphate + 2 reduced [2Fe-2S]-[ferredoxin] + 2 H(+). It catalyses the reaction dimethylallyl diphosphate + 2 oxidized [2Fe-2S]-[ferredoxin] + H2O = (2E)-4-hydroxy-3-methylbut-2-enyl diphosphate + 2 reduced [2Fe-2S]-[ferredoxin] + 2 H(+). It participates in isoprenoid biosynthesis; dimethylallyl diphosphate biosynthesis; dimethylallyl diphosphate from (2E)-4-hydroxy-3-methylbutenyl diphosphate: step 1/1. Its pathway is isoprenoid biosynthesis; isopentenyl diphosphate biosynthesis via DXP pathway; isopentenyl diphosphate from 1-deoxy-D-xylulose 5-phosphate: step 6/6. In terms of biological role, catalyzes the conversion of 1-hydroxy-2-methyl-2-(E)-butenyl 4-diphosphate (HMBPP) into a mixture of isopentenyl diphosphate (IPP) and dimethylallyl diphosphate (DMAPP). Acts in the terminal step of the DOXP/MEP pathway for isoprenoid precursor biosynthesis. This is 4-hydroxy-3-methylbut-2-enyl diphosphate reductase from Vibrio cholerae serotype O1 (strain ATCC 39315 / El Tor Inaba N16961).